Consider the following 92-residue polypeptide: C-C motif chemokine 3 (92 aa).

The signal sequence occupies residues 1 to 23; that stretch reads MQVSTAALAVLLCTMALCNQFSA. 2 disulfide bridges follow: cysteine 33/cysteine 57 and cysteine 34/cysteine 73.

The protein belongs to the intercrine beta (chemokine CC) family. Self-associates. Also heterodimer of MIP-1-alpha(4-69) and MIP-1-beta(3-69). Interacts with CCR1.

Its subcellular location is the secreted. In terms of biological role, monokine with inflammatory and chemokinetic properties. Binds to CCR1, CCR4 and CCR5. One of the major HIV-suppressive factors produced by CD8+ T-cells. Recombinant MIP-1-alpha induces a dose-dependent inhibition of different strains of HIV-1, HIV-2, and simian immunodeficiency virus (SIV). The chain is C-C motif chemokine 3 (CCL3) from Pan troglodytes (Chimpanzee).